A 209-amino-acid polypeptide reads, in one-letter code: GTP cyclohydrolase 1 (209 aa).

Cysteine 89, histidine 92, and cysteine 163 together coordinate Zn(2+).

It belongs to the GTP cyclohydrolase I family. Toroid-shaped homodecamer, composed of two pentamers of five dimers.

It carries out the reaction GTP + H2O = 7,8-dihydroneopterin 3'-triphosphate + formate + H(+). The protein operates within cofactor biosynthesis; 7,8-dihydroneopterin triphosphate biosynthesis; 7,8-dihydroneopterin triphosphate from GTP: step 1/1. This chain is GTP cyclohydrolase 1, found in Sulfolobus acidocaldarius (strain ATCC 33909 / DSM 639 / JCM 8929 / NBRC 15157 / NCIMB 11770).